Reading from the N-terminus, the 420-residue chain is MDALSVSEINAKIKALLEATFLQVRVQGEVSNLTIHKVSGHAYFSLKDSQSVIRCTLFRGNASKLKFALKEGQEVAVFGAISVYPPRGDYQINCFEIEPKDWGSLALALEQLKEKLRLKGYFDKENKLPKPSFPKRVAIITSQNSAAWADMQKIAFKRWPMCELVCINTLMQGEGCVQSVVESIAYADSFYNTRNAFDAIVVARGGGSMEDLYSFNDERIADALHLAKTFSMSAIGHESDFLLSDSVADLRASTPSNAMEILLPSSEEWQQKLDGFNLKLQRSFKILLHQKKVHLEHLAASLKRLSFENKHHLNSLKLEKLKIALENKTLEFLRLKKTLLEKISTQLSTSPFLQTKTERLNALDNALKLAHAHLKLPKFGAFVSKNNQAIELEELKIGDKIELNNEKARASAAILSVDKA.

The protein belongs to the XseA family. Heterooligomer composed of large and small subunits.

It is found in the cytoplasm. The enzyme catalyses Exonucleolytic cleavage in either 5'- to 3'- or 3'- to 5'-direction to yield nucleoside 5'-phosphates.. In terms of biological role, bidirectionally degrades single-stranded DNA into large acid-insoluble oligonucleotides, which are then degraded further into small acid-soluble oligonucleotides. This is Exodeoxyribonuclease 7 large subunit from Helicobacter acinonychis (strain Sheeba).